The following is a 423-amino-acid chain: Protein SOSEKI 5 (423 aa).

Residues 1 to 33 (MSSRVFRATPDNNYLVPRRSKDQQDTSPDRNRI) form a disordered region. The segment covering 19–33 (RSKDQQDTSPDRNRI) has biased composition (basic and acidic residues). The segment at 45–136 (RKVPVVYYLC…YVLKGSEVLD (92 aa)) is DIX-like oligomerization domain. Disordered stretches follow at residues 150–172 (SSFR…PAVI) and 196–258 (SSAE…SPET). A compositionally biased stretch (polar residues) spans 196–211 (SSAESTQRLAADASTQ). Short sequence motifs (association to cell membranes) lie at residues 233-234 (AS) and 303-304 (CG). Positions 379–423 (SSSYNADRCSRMGPTTEKDEEEAVRAKCIPRKPKPVAKRNNGGQQ) are disordered. A compositionally biased stretch (basic residues) spans 406 to 415 (CIPRKPKPVA).

This sequence belongs to the SOSEKI family. Homodimer. Forms long polymer filaments with other SOKs proteins polymers (e.g. SOK1, SOK2, SOK3 and SOK4) crucial for polar localization and biological activity. Binds to ANGUSTIFOLIA (AN). As to expression, expressed during embryogenesis and in roots.

Its subcellular location is the cell membrane. In terms of biological role, SOSEKI proteins (SOK1-5) locally interpret global polarity cues and can influence cell division orientation to coordinate cell polarization relative to body axes. In Arabidopsis thaliana (Mouse-ear cress), this protein is Protein SOSEKI 5.